We begin with the raw amino-acid sequence, 470 residues long: Ubiquitin carboxyl-terminal hydrolase calypso (470 aa).

Residues 43–274 enclose the UCH catalytic domain; it reads GWLELESDPG…IRFNLMAVVP (232 aa). Residue cysteine 129 is the Nucleophile of the active site. Catalysis depends on histidine 211, which acts as the Proton donor. A disordered region spans residues 305 to 324; sequence DEQGEGGNGDPQRPDTPSTL. The region spanning 373–401 is the ULD domain; it reads NYDKFICTFLSMLAHQGVLGELVSQHLLP. The segment at 403–470 is positively charged C-terminal tail required for binding nucleosomes; that stretch reads KKISGQSAAN…KGRNKCKKRK (68 aa). Over residues 422–451 the composition is skewed to low complexity; that stretch reads ANAGATAAGAAGAAPKSQQQQAAAAKNGKS. The disordered stretch occupies residues 422 to 470; the sequence is ANAGATAAGAAGAAPKSQQQQAAAAKNGKSPSKTPGRRRKGRNKCKKRK. Positions 456 to 470 are enriched in basic residues; that stretch reads PGRRRKGRNKCKKRK.

Belongs to the peptidase C12 family. BAP1 subfamily. As to quaternary structure, catalytic component of the polycomb repressive deubiquitinase (PR-DUB) complex, at least composed of caly/calypso, Asx and sba (MBD5/6 homolog). The PR-DUB complex associates with nucleosomes to mediate deubiquitination of histone H2AK118ub1 substrates; the association requires the positively charged C-terminal tail of caly, probably due to direct binding of DNA. Interacts (via ULD domain) with Asx (via DEUBAD domain); the interaction produces a stable heterodimer with a composite binding site for ubiquitin. Homodimerizes (via coiled-coil hinge-region between the UCH and ULD domains) to mediate assembly of 2 copies of the caly-Asx heterodimer into a bisymmetric tetramer; dimerization enhances PR-DUB association with nucleosomes.

It is found in the nucleus. The enzyme catalyses Thiol-dependent hydrolysis of ester, thioester, amide, peptide and isopeptide bonds formed by the C-terminal Gly of ubiquitin (a 76-residue protein attached to proteins as an intracellular targeting signal).. Its function is as follows. Catalytic component of the polycomb repressive deubiquitinase (PR-DUB) complex, a complex that specifically mediates deubiquitination of histone H2A monoubiquitinated at 'Lys-119' (H2AK118ub1). Mediates bisymmetric organization of the PR-DUB complex and is involved in association with nucleosomes to mediate deubiquitination. Does not deubiquitinate monoubiquitinated histone H2B. Required to maintain the transcriptionally repressive state of homeotic genes throughout development. The PR-DUB complex has weak or no activity toward 'Lys-48'- and 'Lys-63'-linked polyubiquitin chains. Polycomb group (PcG) protein. This is Ubiquitin carboxyl-terminal hydrolase calypso from Drosophila ananassae (Fruit fly).